The primary structure comprises 133 residues: Holo-[acyl-carrier-protein] synthase (133 aa).

Positions 8 and 57 each coordinate Mg(2+).

Belongs to the P-Pant transferase superfamily. AcpS family. It depends on Mg(2+) as a cofactor.

Its subcellular location is the cytoplasm. The enzyme catalyses apo-[ACP] + CoA = holo-[ACP] + adenosine 3',5'-bisphosphate + H(+). Transfers the 4'-phosphopantetheine moiety from coenzyme A to a Ser of acyl-carrier-protein. This chain is Holo-[acyl-carrier-protein] synthase, found in Caulobacter sp. (strain K31).